An 86-amino-acid chain; its full sequence is Putative membrane protein insertion efficiency factor (86 aa).

The protein belongs to the UPF0161 family.

The protein localises to the cell inner membrane. Could be involved in insertion of integral membrane proteins into the membrane. The chain is Putative membrane protein insertion efficiency factor from Ruegeria sp. (strain TM1040) (Silicibacter sp.).